The chain runs to 606 residues: MTVLGYPRSWSCHCLPVLILLLGIGHGPWVEGVTHYKPGDPVILYVNKVGPYHNPQETYHYYQLPVCCPEKIRHKSLSLGEVLDGDRMAESLYEIRFRENVEKRILCHMQLSSAQVEQLRQAIEELYYFEFVVDDLPIRGFVGYMEESGFLPHSHKIGLWTHLDFHLEFHGDRIIFANVSVRDVKPHSLDGLRSDELLGLTHTYSVRWSETSVEHRSDRRRGDDGGFFPRTLEIHWLSIINSMVLVFLLVGFVAVILMRVLRNDLARYNLDEETSSGGSSDDFDQGDNGWKIIHTDVFRFPPYRGLLCAVLGVGAQFLALGTGIIVMALLGMFNVHRHGAINSAAILLYALTCCISGYVSSHFYRQIGGERWVWNIILTSSLFSVPFFLTWSVVNSVHWANGSTQALPATTILLLLTVWLLVGFPLTVIGGIFGKNNASPFDAPCRTKNIAREIPPQPWYKSTVIHMTVGGFLPFSAISVELYYIFATVWGREQYTLYGILFFVFAILLSVGACISIALTYFQLSGEDYRWWWRSVLSVGSTGLFIFLYSVFYYARRSNMSGAVQTVEFFGYSLLTGYVFFLMLGTISFFSSLKFIRYIYVNLKMD.

A signal peptide spans 1 to 27; the sequence is MTVLGYPRSWSCHCLPVLILLLGIGHG. N-linked (GlcNAc...) asparagine glycosylation occurs at N178. The next 4 helical transmembrane spans lie at 237–257, 310–330, 339–359, and 373–393; these read LSII…AVIL, VLGV…MALL, GAIN…SGYV, and VWNI…TWSV. N-linked (GlcNAc...) asparagine glycosylation is present at N401. Helical transmembrane passes span 412 to 432, 469 to 489, 499 to 519, and 535 to 555; these read ILLL…IGGI, VGGF…FATV, GILF…SIAL, and SVLS…FYYA. N559 carries N-linked (GlcNAc...) asparagine glycosylation. Residues 570–590 form a helical membrane-spanning segment; it reads FGYSLLTGYVFFLMLGTISFF.

It belongs to the nonaspanin (TM9SF) (TC 9.A.2) family.

It is found in the lysosome membrane. It localises to the cytoplasmic vesicle. The protein localises to the autophagosome membrane. In terms of biological role, plays an essential role in autophagy. This chain is Transmembrane 9 superfamily member 1 (Tm9sf1), found in Mus musculus (Mouse).